The following is a 379-amino-acid chain: Beta-1,3-N-acetylglucosaminyltransferase lunatic fringe (379 aa).

At M1–R8 the chain is on the cytoplasmic side. The helical; Signal-anchor for type II membrane protein transmembrane segment at L9 to P29 threads the bilayer. The Lumenal portion of the chain corresponds to P30 to F379. The segment at R86–A107 is disordered. Substrate is bound at residue R129. An N-linked (GlcNAc...) asparagine glycan is attached at N167. Cystine bridges form between C168-C179 and C197-C260. A substrate-binding site is contributed by D201. A Mn(2+)-binding site is contributed by D202. D290 is an active-site residue. H314 contacts Mn(2+). Residues C364 and C373 are joined by a disulfide bond.

The protein belongs to the glycosyltransferase 31 family. It depends on Mn(2+) as a cofactor. The cofactor is Co(2+). A soluble form may be derived from the membrane form by proteolytic processing.

The protein resides in the golgi apparatus. The protein localises to the golgi apparatus membrane. The catalysed reaction is 3-O-(alpha-L-fucosyl)-L-threonyl-[EGF-like domain protein] + UDP-N-acetyl-alpha-D-glucosamine = 3-O-(N-acetyl-beta-D-glucosaminyl-(1-&gt;3)-alpha-L-fucosyl)-L-threonyl-[EGF-like domain protein] + UDP + H(+). The enzyme catalyses 3-O-(alpha-L-fucosyl)-L-seryl-[EGF-like domain protein] + UDP-N-acetyl-alpha-D-glucosamine = 3-O-(N-acetyl-beta-D-glucosaminyl-(1-&gt;3)-alpha-L-fucosyl)-L-seryl-[EGF-like domain protein] + UDP + H(+). Its function is as follows. Glycosyltransferase that initiates the elongation of O-linked fucose residues attached to EGF-like repeats in the extracellular domain of Notch molecules. Modulates NOTCH1 activity by modifying O-fucose residues at specific EGF-like domains resulting in inhibition of NOTCH1 activation by JAG1 and enhancement of NOTCH1 activation by DLL1 via an increase in its binding to DLL1. Decreases the binding of JAG1 to NOTCH2 but not that of DLL1. Essential mediator of somite segmentation and patterning. This chain is Beta-1,3-N-acetylglucosaminyltransferase lunatic fringe, found in Homo sapiens (Human).